Consider the following 134-residue polypeptide: Small ribosomal subunit protein uS8 (134 aa).

It belongs to the universal ribosomal protein uS8 family. As to quaternary structure, part of the 30S ribosomal subunit. Contacts proteins S5 and S12.

One of the primary rRNA binding proteins, it binds directly to 16S rRNA central domain where it helps coordinate assembly of the platform of the 30S subunit. The sequence is that of Small ribosomal subunit protein uS8 from Fervidobacterium nodosum (strain ATCC 35602 / DSM 5306 / Rt17-B1).